Reading from the N-terminus, the 322-residue chain is Putative membrane-bound redox modulator Alx (322 aa).

At 1-6 (MNTVGT) the chain is on the periplasmic side. Residues 7-27 (PLLWGGFAVVVVIMLSIDLLL) form a helical membrane-spanning segment. Over 28–43 (QGRRGAHAMSMKQAAG) the chain is Cytoplasmic. The chain crosses the membrane as a helical span at residues 44 to 64 (WSILWVTLSLLFNAAFWWYLA). Residues 65–89 (ETQGREVADPQALAFLTGYLIEKSL) are Periplasmic-facing. Residues 90 to 110 (AVDNVFVWLMLFSYFSVPPAL) traverse the membrane as a helical segment. The Cytoplasmic portion of the chain corresponds to 111 to 113 (QRR). Residues 114–134 (VLVYGVLGAIVLRTIMIFAGT) form a helical membrane-spanning segment. Position 135 (Trp135) is a topological domain, periplasmic. Residues 136–156 (LITQFEWLLYVFGAFLLFTGV) traverse the membrane as a helical segment. At 157–198 (KMALAKEDESGIGEKPMVRWLRGHLRMTDTIENEHFFVRKNG) the chain is on the cytoplasmic side. A helical transmembrane segment spans residues 199–219 (LLYATPLLLVLIMVEFSDVIF). The Periplasmic portion of the chain corresponds to 220 to 225 (AVDSIP). The chain crosses the membrane as a helical span at residues 226–246 (AIFAVTTDPFIVLTSNLFAIL). The Cytoplasmic segment spans residues 247–261 (GLRAMYFLLSGVAER). A helical transmembrane segment spans residues 262–282 (FSMLKYGLAVILVFIGIKMLI). Over 283–286 (VDFY) the chain is Periplasmic. Residues 287 to 307 (HIPIAISLGVVFGILTITLVI) traverse the membrane as a helical segment. Residues 308 to 321 (NTWVNHQRDKKLRA) are Cytoplasmic-facing.

It belongs to the TerC family.

Its subcellular location is the cell inner membrane. In terms of biological role, has been proposed to be a redox modulator. This is Putative membrane-bound redox modulator Alx (alx) from Salmonella typhi.